We begin with the raw amino-acid sequence, 118 residues long: BET1 homolog (118 aa).

Over 1–94 (MRRAGLGEGV…LKILSRGSQT (94 aa)) the chain is Cytoplasmic. The t-SNARE coiled-coil homology domain maps to 26-88 (SACEEENERL…GKTMGKLKIL (63 aa)). Serine 50 bears the Phosphoserine mark. The helical; Anchor for type IV membrane protein transmembrane segment at 95 to 115 (KLLCYMMLFSLFVFFIIYWII) threads the bilayer. The Vesicular portion of the chain corresponds to 116-118 (KLR).

The protein belongs to the BET1 family. Interacts with SNARE complex members GOSR2, SEC22B and STX5. Interacts with LMAN1/ERGIC53. Interacts with STX17. Expressed in muscle.

It localises to the endoplasmic reticulum membrane. The protein resides in the golgi apparatus. It is found in the cis-Golgi network membrane. Its subcellular location is the golgi apparatus membrane. Its function is as follows. Required for vesicular transport from the ER to the Golgi complex. Functions as a SNARE involved in the docking process of ER-derived vesicles with the cis-Golgi membrane. The sequence is that of BET1 homolog (BET1) from Homo sapiens (Human).